Consider the following 473-residue polypeptide: MKLSMPRFDQAPVLVVGDVMLDRYWHGGTSRISPEAPVPVVKVDQIEDRPGGAANVALNIAALGAPASLIGVTGQDEAADSLANSLQAAGVRSVFQRIAHQPTIVKLRVMSRHQQLLRIDFEEPFATDPLSLATEVDSLLEGVKVLVLSDYGKGALKNHQSLIQAARAKGIPVLADPKGKDFSIYRGASLITPNLSEFETIVGRCTDEADLVAKGLQLLQDLDLGALLVTRGEHGMTLLRVGQPALHLPARAREVFDVTGAGDTVISTLAAAIAAGEDLPHAVALANLAAGIVVGKLGTAAISAPELRRAIQREEGSERGVLGLEQLLLAIDDARAHKEKIVFTNGCFDILHAGHVTYLEQARAQGDRLIVAVNDDASVSRLKGPGRPINSVDRRMAVLAGLGAVDWVISFPEGTPENLLSQVKPDVLVKGGDYGIDQVVGADIVKAYGGTVKVLGLVENSSTTAIVEKIRKN.

A ribokinase region spans residues 1 to 318 (MKLSMPRFDQ…RAIQREEGSE (318 aa)). ATP is bound at residue 194–197 (NLSE). Residue Asp-263 is part of the active site. The interval 343–473 (FTNGCFDILH…TAIVEKIRKN (131 aa)) is cytidylyltransferase.

The protein in the N-terminal section; belongs to the carbohydrate kinase PfkB family. It in the C-terminal section; belongs to the cytidylyltransferase family. In terms of assembly, homodimer.

It carries out the reaction D-glycero-beta-D-manno-heptose 7-phosphate + ATP = D-glycero-beta-D-manno-heptose 1,7-bisphosphate + ADP + H(+). The enzyme catalyses D-glycero-beta-D-manno-heptose 1-phosphate + ATP + H(+) = ADP-D-glycero-beta-D-manno-heptose + diphosphate. It participates in nucleotide-sugar biosynthesis; ADP-L-glycero-beta-D-manno-heptose biosynthesis; ADP-L-glycero-beta-D-manno-heptose from D-glycero-beta-D-manno-heptose 7-phosphate: step 1/4. The protein operates within nucleotide-sugar biosynthesis; ADP-L-glycero-beta-D-manno-heptose biosynthesis; ADP-L-glycero-beta-D-manno-heptose from D-glycero-beta-D-manno-heptose 7-phosphate: step 3/4. In terms of biological role, catalyzes the phosphorylation of D-glycero-D-manno-heptose 7-phosphate at the C-1 position to selectively form D-glycero-beta-D-manno-heptose-1,7-bisphosphate. Catalyzes the ADP transfer from ATP to D-glycero-beta-D-manno-heptose 1-phosphate, yielding ADP-D-glycero-beta-D-manno-heptose. The chain is Bifunctional protein HldE from Pseudomonas putida (strain GB-1).